The sequence spans 126 residues: Large ribosomal subunit protein bL20 (126 aa).

Belongs to the bacterial ribosomal protein bL20 family.

Functionally, binds directly to 23S ribosomal RNA and is necessary for the in vitro assembly process of the 50S ribosomal subunit. It is not involved in the protein synthesizing functions of that subunit. The polypeptide is Large ribosomal subunit protein bL20 (Acholeplasma laidlawii (strain PG-8A)).